The primary structure comprises 311 residues: Heme A synthase (311 aa).

At 1–6 (MQRFIK) the chain is on the cytoplasmic side. Residues 7–27 (WLAVITSLDLLIVLLGGALVT) traverse the membrane as a helical segment. Residues 28 to 62 (KTGSGQGCGKSWPLCNGEFVPSNLSMETIIELSHR) are Extracellular-facing. A disulfide bond links C35 and C42. E58 is a catalytic residue. A heme o-binding site is contributed by H61. A helical membrane pass occupies residues 63 to 83 (LTSGSAGILVTLLCILSWKYY). At 84–91 (KHVRETKT) the chain is on the cytoplasmic side. A helical membrane pass occupies residues 92–112 (LAILSFVFLVAQALMGAAAVV). Residues 113-121 (WGQMPAVLA) are Extracellular-facing. Residues 122 to 142 (IHFGISLISFASVILLTCLIF) form a helical membrane-spanning segment. A heme o-binding site is contributed by H123. Topologically, residues 143-159 (EIDQKFDARSLIMDKKM) are cytoplasmic. The helical transmembrane segment at 160–180 (KFHIYGVTIYSYIVVYTGALV) threads the bilayer. At 181-211 (RHERASLACPDFPLCSKNRPMPTQLHEWVQM) the chain is on the extracellular side. C189 and C195 are joined by a disulfide. A helical transmembrane segment spans residues 212–232 (GHRVAAMLIFAWILYAMILAI). H213 lines the heme b pocket. Residues 233–243 (RHYKQQPVVYW) lie on the Cytoplasmic side of the membrane. Residues 244–264 (GWIISFILVTLQAIVGILVVF) traverse the membrane as a helical segment. At 265-271 (TNASLSM) the chain is on the extracellular side. A helical transmembrane segment spans residues 272-292 (ALLHSLFISCLFAVLCYLVML). Residue H275 participates in heme b binding. The Cytoplasmic portion of the chain corresponds to 293-311 (GTRSKVNAKEAASISKQTK).

Belongs to the COX15/CtaA family. Type 1 subfamily. Interacts with CtaB. The cofactor is heme b.

It localises to the cell membrane. The enzyme catalyses Fe(II)-heme o + 2 A + H2O = Fe(II)-heme a + 2 AH2. It functions in the pathway porphyrin-containing compound metabolism; heme A biosynthesis; heme A from heme O: step 1/1. Functionally, catalyzes the conversion of heme O to heme A by two successive hydroxylations of the methyl group at C8. The first hydroxylation forms heme I, the second hydroxylation results in an unstable dihydroxymethyl group, which spontaneously dehydrates, resulting in the formyl group of heme A. In Bacillus cereus (strain AH187), this protein is Heme A synthase.